The following is a 219-amino-acid chain: N-(5'-phosphoribosyl)anthranilate isomerase (219 aa).

The protein belongs to the TrpF family.

The enzyme catalyses N-(5-phospho-beta-D-ribosyl)anthranilate = 1-(2-carboxyphenylamino)-1-deoxy-D-ribulose 5-phosphate. The protein operates within amino-acid biosynthesis; L-tryptophan biosynthesis; L-tryptophan from chorismate: step 3/5. The polypeptide is N-(5'-phosphoribosyl)anthranilate isomerase (Chloroherpeton thalassium (strain ATCC 35110 / GB-78)).